The chain runs to 261 residues: Proliferating cell nuclear antigen (261 aa).

Lysine 14, lysine 77, and lysine 80 each carry N6-acetyllysine. Residues 61–80 (RCDRNLAMGVNLTSMSKILK) mediate DNA binding. Cysteine 135 and cysteine 162 are joined by a disulfide. A Glycyl lysine isopeptide (Lys-Gly) (interchain with G-Cter in SUMO2); alternate cross-link involves residue lysine 164. Lysine 164 is covalently cross-linked (Glycyl lysine isopeptide (Lys-Gly) (interchain with G-Cter in ubiquitin); alternate). Tyrosine 211 is subject to Phosphotyrosine; by EGFR. The residue at position 248 (lysine 248) is an N6-acetyllysine. A Glycyl lysine isopeptide (Lys-Gly) (interchain with G-Cter in SUMO2) cross-link involves residue lysine 254.

Belongs to the PCNA family. Homotrimer. Interacts with p300/EP300; the interaction occurs on chromatin in UV-irradiated damaged cells. Interacts with CREBBP (via transactivation domain and C-terminus); the interaction occurs on chromatin in UV-irradiated damaged cells. Directly interacts with POLD1, POLD3 and POLD4 subunits of the DNA polymerase delta complex, POLD3 being the major interacting partner; the interaction with POLD3 is inhibited by CDKN1A/p21(CIP1). Forms a complex with activator 1 heteropentamer in the presence of ATP. Interacts with EXO1, POLH, POLK, DNMT1, ERCC5, FEN1, CDC6 and POLDIP2. Interacts with POLB. Interacts with APEX2; this interaction is triggered by reactive oxygen species and increased by misincorporation of uracil in nuclear DNA. Forms a ternary complex with DNTTIP2 and core histone. Interacts with KCTD10. Interacts with PPP1R15A. Interacts with SMARCA5/SNF2H. Interacts with BAZ1B/WSTF; the interaction is direct and is required for BAZ1B/WSTF binding to replication foci during S phase. Interacts with HLTF and SHPRH. Interacts with NUDT15. Interaction is disrupted in response to UV irradiation and acetylation. Interacts with CDKN1A/p21(CIP1) and CDT1; interacts via their PIP-box which also recruits the DCX(DTL) complex. The interaction with CDKN1A inhibits POLD3 binding. Interacts with DDX11. Interacts with EGFR; positively regulates PCNA. Interacts with PARPBP. Interacts (when ubiquitinated) with SPRTN; leading to enhance RAD18-mediated PCNA ubiquitination. Interacts (when polyubiquitinated) with ZRANB3. Interacts with SMARCAD1. Interacts with CDKN1C. Interacts with PCLAF (via PIP-box). Interacts with RTEL1 (via PIP-box); the interaction is direct and essential for the suppression of telomere fragility. Interacts with FAM111A (via PIP-box); the interaction is direct and required for PCNA loading on chromatin binding. Interacts with LIG1. Interacts with SETMAR. Interacts with ANKRD17. Interacts with FBXO18/FBH1 (via PIP-box); the interaction recruits the DCX(DTL) complex and promotes ubiquitination and degradation of FBXO18/FBH1. Interacts with POLN. Interacts with SDE2 (via PIP-box); the interaction is direct and prevents ultraviolet light induced monoubiquitination. Component of the replisome complex composed of at least DONSON, MCM2, MCM7, PCNA and TICRR; interaction at least with PCNA occurs during DNA replication. Interacts with MAPK15; the interaction is chromatin binding dependent and prevents MDM2-mediated PCNA destruction by inhibiting the association of PCNA with MDM2. Interacts with PARP10 (via PIP-box). Interacts with DDI2. Interacts with HMCES (via PIP-box). Interacts with TRAIP (via PIP-box). Interacts with UHRF2. Interacts with ALKBH2; this interaction is enhanced during the S-phase of the cell cycle. Interacts with ATAD5; the interaction promotes USP1-mediated PCNA deubiquitination. Interacts (when phosphorylated) with GRB2. Interacts with ANG. Interacts with nuclear UNG; this interaction mediates UNG recruitment to S-phase replication foci. Interacts with ERCC6L2 (via an atypical PIP-box); this interaction facilitates cenrtomeric localization of ERCC6L2. In terms of processing, phosphorylated. Phosphorylation at Tyr-211 by EGFR stabilizes chromatin-associated PCNA. Acetylated by CREBBP and p300/EP300; preferentially acetylated by CREBBP on Lys-80, Lys-13 and Lys-14 and on Lys-77 by p300/EP300 upon loading on chromatin in response to UV irradiation. Lysine acetylation disrupts association with chromatin, hence promoting PCNA ubiquitination and proteasomal degradation in response to UV damage in a CREBBP- and EP300-dependent manner. Acetylation disrupts interaction with NUDT15 and promotes degradation. Post-translationally, ubiquitinated. Following DNA damage, can be either monoubiquitinated to stimulate direct bypass of DNA lesions by specialized DNA polymerases or polyubiquitinated to promote recombination-dependent DNA synthesis across DNA lesions by template switching mechanisms. Following induction of replication stress, monoubiquitinated by the UBE2B-RAD18 complex on Lys-164, leading to recruit translesion (TLS) polymerases, which are able to synthesize across DNA lesions in a potentially error-prone manner. An error-free pathway also exists and requires non-canonical polyubiquitination on Lys-164 through 'Lys-63' linkage of ubiquitin moieties by the E2 complex UBE2N-UBE2V2 and the E3 ligases, HLTF, RNF8 and SHPRH. This error-free pathway, also known as template switching, employs recombination mechanisms to synthesize across the lesion, using as a template the undamaged, newly synthesized strand of the sister chromatid. Monoubiquitination at Lys-164 also takes place in undamaged proliferating cells, and is mediated by the DCX(DTL) complex, leading to enhance PCNA-dependent translesion DNA synthesis. Sumoylated during S phase. In terms of processing, methylated on glutamate residues by ARMT1.

Its subcellular location is the nucleus. Auxiliary protein of DNA polymerase delta and epsilon, is involved in the control of eukaryotic DNA replication by increasing the polymerase's processibility during elongation of the leading strand. Induces a robust stimulatory effect on the 3'-5' exonuclease and 3'-phosphodiesterase, but not apurinic-apyrimidinic (AP) endonuclease, APEX2 activities. Has to be loaded onto DNA in order to be able to stimulate APEX2. Plays a key role in DNA damage response (DDR) by being conveniently positioned at the replication fork to coordinate DNA replication with DNA repair and DNA damage tolerance pathways. Acts as a loading platform to recruit DDR proteins that allow completion of DNA replication after DNA damage and promote postreplication repair: Monoubiquitinated PCNA leads to recruitment of translesion (TLS) polymerases, while 'Lys-63'-linked polyubiquitination of PCNA is involved in error-free pathway and employs recombination mechanisms to synthesize across the lesion. In Rattus norvegicus (Rat), this protein is Proliferating cell nuclear antigen (Pcna).